Reading from the N-terminus, the 449-residue chain is Glutamyl-tRNA reductase (449 aa).

Residues 58–61 (TCNR), Ser121, 126–128 (ETQ), and Gln132 contribute to the substrate site. The active-site Nucleophile is Cys59. 203 to 208 (GLGEMA) provides a ligand contact to NADP(+).

It belongs to the glutamyl-tRNA reductase family. In terms of assembly, homodimer.

It catalyses the reaction (S)-4-amino-5-oxopentanoate + tRNA(Glu) + NADP(+) = L-glutamyl-tRNA(Glu) + NADPH + H(+). Its pathway is porphyrin-containing compound metabolism; protoporphyrin-IX biosynthesis; 5-aminolevulinate from L-glutamyl-tRNA(Glu): step 1/2. Functionally, catalyzes the NADPH-dependent reduction of glutamyl-tRNA(Glu) to glutamate 1-semialdehyde (GSA). The chain is Glutamyl-tRNA reductase from Helicobacter pylori (strain ATCC 700392 / 26695) (Campylobacter pylori).